We begin with the raw amino-acid sequence, 108 residues long: Somatoliberin (108 aa).

The first 20 residues, 1–20 (MPLWVFFFVILTLSNSSHCS), serve as a signal peptide directing secretion. The propeptide occupies 21–31 (PPPPLTLRMRR). Leucine amide is present on L75. A propeptide spanning residues 78–108 (QVDSMWAEQKQMELESILVALLQKHSRNSQG) is cleaved from the precursor.

The protein belongs to the glucagon family.

The protein localises to the secreted. GRF is released by the hypothalamus and acts on the adenohypophyse to stimulate the secretion of growth hormone. This is Somatoliberin (GHRH) from Homo sapiens (Human).